We begin with the raw amino-acid sequence, 308 residues long: Methionyl-tRNA formyltransferase (308 aa).

109 to 112 (SLLP) serves as a coordination point for (6S)-5,6,7,8-tetrahydrofolate.

The protein belongs to the Fmt family.

The enzyme catalyses L-methionyl-tRNA(fMet) + (6R)-10-formyltetrahydrofolate = N-formyl-L-methionyl-tRNA(fMet) + (6S)-5,6,7,8-tetrahydrofolate + H(+). Its function is as follows. Attaches a formyl group to the free amino group of methionyl-tRNA(fMet). The formyl group appears to play a dual role in the initiator identity of N-formylmethionyl-tRNA by promoting its recognition by IF2 and preventing the misappropriation of this tRNA by the elongation apparatus. The protein is Methionyl-tRNA formyltransferase of Methylobacillus flagellatus (strain ATCC 51484 / DSM 6875 / VKM B-1610 / KT).